Here is a 583-residue protein sequence, read N- to C-terminus: MASREDRDAANARVIQLQQQVERLEEEVASLRRRLAESPRGSRSLEERLAAAQATIAGLTSQNERLVATLKEARDQIVALREEVDRLAQPPSGYGIFLGRHEDGTVDVFTGGRKLRVTVSPSVDVDSLRKGQEVMLNEALNVVRAMSFERQGEVVMFKELLDGDRALVIAHADEERVVMLADSLADTPLRVGDSLLIEPRSGFAYERIPKAEVEELVLEEVPDVDYSKIGGLSAQIEQIRDAIELPYLYPELFKEHKLRPPKGVLLYGPPGCGKTLIAKAVANSLAKKVAEVTGKPEGKSFFLNIKGPELLNKYVGETERHIRLVFQRAREKASGGWPVIVFFDEMDSIFRTRGSGVSSDVENTIVPQLLSEIDGVEGLENVIVIGASNREDMIDPAILRPGRLDVKIKIERPDAEAARDIFSKYITPDLPLHPDDLAEHGGSREATVQAMIQHAVERMYAETEENRFLEVTYANGDKEVLYFKDFNSGAMIQNIVDRAKKMAIKDFLETGQKGLRIQHLMAACYDEFKENEDLPNTTNPDDWARISGKKGERIVYIRTLISGKQGTEAGRSIDTIANTGQYL.

Residues 2 to 90 (ASREDRDAAN…REEVDRLAQP (89 aa)) are a coiled coil. 271–276 (GCGKTL) lines the ATP pocket. The tract at residues 582–583 (YL) is docks into pockets in the proteasome alpha-ring.

The protein belongs to the AAA ATPase family. Homohexamer. Assembles into a hexameric ring structure that caps the 20S proteasome core. Strongly interacts with the prokaryotic ubiquitin-like protein Pup through a hydrophobic interface; the interacting region of ARC lies in its N-terminal coiled-coil domain. There is one Pup binding site per ARC hexamer ring. Upon ATP-binding, the C-terminus of ARC interacts with the alpha-rings of the proteasome core, possibly by binding to the intersubunit pockets.

The protein operates within protein degradation; proteasomal Pup-dependent pathway. In terms of biological role, ATPase which is responsible for recognizing, binding, unfolding and translocation of pupylated proteins into the bacterial 20S proteasome core particle. May be essential for opening the gate of the 20S proteasome via an interaction with its C-terminus, thereby allowing substrate entry and access to the site of proteolysis. Thus, the C-termini of the proteasomal ATPase may function like a 'key in a lock' to induce gate opening and therefore regulate proteolysis. In Acidothermus cellulolyticus (strain ATCC 43068 / DSM 8971 / 11B), this protein is Proteasome-associated ATPase.